The primary structure comprises 281 residues: Aliphatic sulfonates import ATP-binding protein SsuB (281 aa).

The ABC transporter domain maps to 40–263 (LTLRNLRKSF…RRGSADLAAL (224 aa)). Position 72-79 (72-79 (GRSGCGKS)) interacts with ATP.

This sequence belongs to the ABC transporter superfamily. Aliphatic sulfonates importer (TC 3.A.1.17.2) family. As to quaternary structure, the complex is composed of two ATP-binding proteins (SsuB), two transmembrane proteins (SsuC) and a solute-binding protein (SsuA).

It is found in the cell inner membrane. It catalyses the reaction ATP + H2O + aliphatic sulfonate-[sulfonate-binding protein]Side 1 = ADP + phosphate + aliphatic sulfonateSide 2 + [sulfonate-binding protein]Side 1.. Part of the ABC transporter complex SsuABC involved in aliphatic sulfonates import. Responsible for energy coupling to the transport system. The sequence is that of Aliphatic sulfonates import ATP-binding protein SsuB from Rhodopseudomonas palustris (strain BisA53).